The following is a 149-amino-acid chain: Calmodulin (149 aa).

An N-acetylalanine modification is found at alanine 2. EF-hand domains lie at 8-43, 44-79, 81-116, and 117-149; these read EQIA…LGQN, PTEA…KMKD, DSEE…LGEK, and LTDE…MMAK. Ca(2+) is bound by residues aspartate 21, aspartate 23, aspartate 25, cysteine 27, glutamate 32, aspartate 57, aspartate 59, asparagine 61, threonine 63, glutamate 68, aspartate 94, aspartate 96, asparagine 98, and glutamate 105. N6,N6,N6-trimethyllysine is present on lysine 116. Ca(2+)-binding residues include aspartate 130, aspartate 132, aspartate 134, glutamine 136, and glutamate 141.

The protein belongs to the calmodulin family. Post-translationally, the N-terminus is blocked.

In terms of biological role, calmodulin mediates the control of a large number of enzymes, ion channels and other proteins by Ca(2+). Among the enzymes to be stimulated by the calmodulin-Ca(2+) complex are a number of protein kinases and phosphatases. This Spinacia oleracea (Spinach) protein is Calmodulin.